The sequence spans 410 residues: Ribonucleoside-diphosphate reductase small chain (410 aa).

The segment covering 1–20 (MSVQTSPSKQVTSGIQNLNM) has biased composition (polar residues). 2 disordered regions span residues 1–43 (MSVQ…DEDL) and 55–78 (NANKKAAEAKKMAPTLKPEEANEP). 2 stretches are compositionally biased toward basic and acidic residues: residues 23–43 (PAKKLDFGATDKENKPFDEDL) and 55–65 (NANKKAAEAKK). 3 residues coordinate Fe cation: Asp-146, Glu-177, and His-180. Residue Tyr-184 is part of the active site. Positions 240, 274, and 277 each coordinate Fe cation.

Belongs to the ribonucleoside diphosphate reductase small chain family. As to quaternary structure, heterodimer of a large and a small subunit. Fe cation serves as cofactor.

The catalysed reaction is a 2'-deoxyribonucleoside 5'-diphosphate + [thioredoxin]-disulfide + H2O = a ribonucleoside 5'-diphosphate + [thioredoxin]-dithiol. Functionally, provides the precursors necessary for DNA synthesis. Catalyzes the biosynthesis of deoxyribonucleotides from the corresponding ribonucleotides. The protein is Ribonucleoside-diphosphate reductase small chain (rnr-2) of Neurospora crassa (strain ATCC 24698 / 74-OR23-1A / CBS 708.71 / DSM 1257 / FGSC 987).